A 1178-amino-acid polypeptide reads, in one-letter code: DNA-directed RNA polymerase subunit beta (1178 aa).

Belongs to the RNA polymerase beta chain family. The RNAP catalytic core consists of 2 alpha, 1 beta, 1 beta' and 1 omega subunit. When a sigma factor is associated with the core the holoenzyme is formed, which can initiate transcription.

The enzyme catalyses RNA(n) + a ribonucleoside 5'-triphosphate = RNA(n+1) + diphosphate. DNA-dependent RNA polymerase catalyzes the transcription of DNA into RNA using the four ribonucleoside triphosphates as substrates. In Treponema pallidum (strain Nichols), this protein is DNA-directed RNA polymerase subunit beta.